The primary structure comprises 404 residues: Putative replication protein C (404 aa).

Residues 249-287 are disordered; the sequence is PDQIERHKQNSHPESTNEFEPSSREEQGERPSPAIEPQR.

This sequence to A.rhizogenes possible replication protein C (RepC).

This Sinorhizobium fredii (strain NBRC 101917 / NGR234) protein is Putative replication protein C.